The primary structure comprises 136 residues: MAKKTTKRMPKRREEYTYHGYNIEQLKAMSMDELLAIMPSGARRKVLRGFTRDEEDVRAKIAEGDGVRTHSRSMIILPEMVGKNVAIYSGKEFINVEIPVEGVFHYFGEFALTRKKVTHGSAGIGATKSSKYVPLK.

It belongs to the universal ribosomal protein uS19 family.

Functionally, protein S19 forms a complex with S13 that binds strongly to the 16S ribosomal RNA. In Methanocorpusculum labreanum (strain ATCC 43576 / DSM 4855 / Z), this protein is Small ribosomal subunit protein uS19.